The primary structure comprises 270 residues: uncharacterized protein (270 aa).

The N-terminal stretch at 1–22 (MEYIKKIALYMSVLLLIIFIGG) is a signal peptide. The N-palmitoyl cysteine moiety is linked to residue Cys-23. The S-diacylglycerol cysteine moiety is linked to residue Cys-23.

It belongs to the staphylococcal tandem lipoprotein family.

It localises to the cell membrane. This is an uncharacterized protein from Staphylococcus aureus (strain N315).